We begin with the raw amino-acid sequence, 400 residues long: Enolase (400 aa).

Residue Gln-153 coordinates (2R)-2-phosphoglycerate. Glu-195 functions as the Proton donor in the catalytic mechanism. Mg(2+) contacts are provided by Asp-231, Glu-274, and Asp-301. Positions 326, 355, 356, and 377 each coordinate (2R)-2-phosphoglycerate. Lys-326 functions as the Proton acceptor in the catalytic mechanism.

This sequence belongs to the enolase family. The cofactor is Mg(2+).

Its subcellular location is the cytoplasm. It is found in the secreted. The protein localises to the cell surface. The enzyme catalyses (2R)-2-phosphoglycerate = phosphoenolpyruvate + H2O. It participates in carbohydrate degradation; glycolysis; pyruvate from D-glyceraldehyde 3-phosphate: step 4/5. Catalyzes the reversible conversion of 2-phosphoglycerate (2-PG) into phosphoenolpyruvate (PEP). It is essential for the degradation of carbohydrates via glycolysis. This is Enolase from Halorubrum lacusprofundi (strain ATCC 49239 / DSM 5036 / JCM 8891 / ACAM 34).